A 636-amino-acid polypeptide reads, in one-letter code: Iron transport multicopper oxidase FET3 (636 aa).

The N-terminal stretch at M1–A21 is a signal peptide. Residues E22–K559 are Extracellular-facing. N-linked (GlcNAc...) asparagine glycosylation is found at N27, N74, and N77. 2 Plastocyanin-like domains span residues W32–D146 and S157–K301. Cu cation-binding residues include H81 and H83. N88 and N113 each carry an N-linked (GlcNAc...) asparagine glycan. H126 and H128 together coordinate Cu cation. Residues N194, N198, N244, N265, N292, N300, N359, and N381 are each glycosylated (N-linked (GlcNAc...) asparagine). The region spanning Y362–P502 is the Plastocyanin-like 3 domain. Positions 413, 416, 418, 483, 484, 485, and 489 each coordinate Cu cation. A helical transmembrane segment spans residues G560 to M584. Residues D585–F636 are Cytoplasmic-facing.

The protein belongs to the multicopper oxidase family. The cofactor is Cu cation.

The protein resides in the cell membrane. The catalysed reaction is 4 Fe(2+) + O2 + 4 H(+) = 4 Fe(3+) + 2 H2O. It carries out the reaction 4 Cu(+) + O2 + 4 H(+) = 4 Cu(2+) + 2 H2O. Functionally, iron transport multicopper ferroxidase required for Fe(2+) ion high affinity uptake. Required to oxidize Fe(2+) to Fe(3+), which is then transported into the cell via the ferric iron permease FTR1. Essential component of copper-dependent iron transport. Also has cuprous oxidase activity. The polypeptide is Iron transport multicopper oxidase FET3 (FET3) (Saccharomyces cerevisiae (strain ATCC 204508 / S288c) (Baker's yeast)).